Reading from the N-terminus, the 217-residue chain is MQHSAWHALIKEQLPEGYFAKINHFLDEVYASGTIYPPREKVFNAIQTTDLADVKVVILGQDPYHGPRQAQGLSFSVPDDIPAPPSLQNILKELADDIGVKESHDLTSWAQQGVLLLNAGLTVPAGQANAHAGLIWESFTDAIIKVVNEKSDPVVFILWGSYARKKKALISNPQHLIIESAHPSPLSAYRGFFGSKPFSRTNDFLVAKGLEPINWLA.

Residue D62 is the Proton acceptor of the active site.

This sequence belongs to the uracil-DNA glycosylase (UDG) superfamily. UNG family.

Its subcellular location is the cytoplasm. The catalysed reaction is Hydrolyzes single-stranded DNA or mismatched double-stranded DNA and polynucleotides, releasing free uracil.. In terms of biological role, excises uracil residues from the DNA which can arise as a result of misincorporation of dUMP residues by DNA polymerase or due to deamination of cytosine. In Streptococcus sanguinis (strain SK36), this protein is Uracil-DNA glycosylase.